Reading from the N-terminus, the 213-residue chain is MFTVIVNLKNYAEANGKNFVEFVSKLPKYDSVRLIIAPAILDLHNAHEFRNVEFFSQHVDDVGYGPYTGHIAIESLMNYGIIGSLLNHSERRLGEDKIISTVKKAQMLGFEIALCVESMEEAKRYSALKPSFIAYEPKELIGGNVSVSTAKPEIISEIVDICGTEGVPVLVGAGIKNRQDVRKSLDLGAQGILVSSGVVKSPDPVRSLNSLIK.

Position 7 to 9 (7 to 9) interacts with substrate; it reads NLK. Histidine 88 (electrophile) is an active-site residue. The active-site Proton acceptor is glutamate 136. Substrate is bound by residues isoleucine 141 and glycine 174.

It belongs to the triosephosphate isomerase family. As to quaternary structure, homotetramer; dimer of dimers.

Its subcellular location is the cytoplasm. The enzyme catalyses D-glyceraldehyde 3-phosphate = dihydroxyacetone phosphate. It functions in the pathway carbohydrate biosynthesis; gluconeogenesis. It participates in carbohydrate degradation; glycolysis; D-glyceraldehyde 3-phosphate from glycerone phosphate: step 1/1. Its function is as follows. Involved in the gluconeogenesis. Catalyzes stereospecifically the conversion of dihydroxyacetone phosphate (DHAP) to D-glyceraldehyde-3-phosphate (G3P). In Thermoplasma volcanium (strain ATCC 51530 / DSM 4299 / JCM 9571 / NBRC 15438 / GSS1), this protein is Triosephosphate isomerase.